Reading from the N-terminus, the 156-residue chain is Small ribosomal subunit protein uS7c (156 aa).

This sequence belongs to the universal ribosomal protein uS7 family. Part of the 30S ribosomal subunit.

The protein resides in the plastid. It localises to the chloroplast. One of the primary rRNA binding proteins, it binds directly to 16S rRNA where it nucleates assembly of the head domain of the 30S subunit. This Porphyra purpurea (Red seaweed) protein is Small ribosomal subunit protein uS7c (rps7).